Here is a 202-residue protein sequence, read N- to C-terminus: MATIPIVIETTGRTERAYDIYSRLLRDRIILLGSAVDDYVANLICAQLLFLESEDPEKEIFMYINSPGGVVSAGLAIYDTMQYVMPPVSTLCLGQAASMGALLLCAGATGMRYALPHSRIMIHQPSGGYQGQATDIEIHAKETRRTRETLNEIMAKHTGQSMERIQVDTERDNFMSAEEAVAYGLIDKVLTSRERLEKKDAE.

The active-site Nucleophile is the Ser-98. His-123 is an active-site residue.

Belongs to the peptidase S14 family. As to quaternary structure, fourteen ClpP subunits assemble into 2 heptameric rings which stack back to back to give a disk-like structure with a central cavity, resembling the structure of eukaryotic proteasomes.

It localises to the cytoplasm. The catalysed reaction is Hydrolysis of proteins to small peptides in the presence of ATP and magnesium. alpha-casein is the usual test substrate. In the absence of ATP, only oligopeptides shorter than five residues are hydrolyzed (such as succinyl-Leu-Tyr-|-NHMec, and Leu-Tyr-Leu-|-Tyr-Trp, in which cleavage of the -Tyr-|-Leu- and -Tyr-|-Trp bonds also occurs).. Its function is as follows. Cleaves peptides in various proteins in a process that requires ATP hydrolysis. Has a chymotrypsin-like activity. Plays a major role in the degradation of misfolded proteins. In Solidesulfovibrio magneticus (strain ATCC 700980 / DSM 13731 / RS-1) (Desulfovibrio magneticus), this protein is ATP-dependent Clp protease proteolytic subunit.